We begin with the raw amino-acid sequence, 413 residues long: Aspartate aminotransferase, cytoplasmic (413 aa).

2 residues coordinate L-aspartate: Gly39 and Trp141. Ser149 carries the phosphoserine modification. Asn195 provides a ligand contact to L-aspartate. At Lys259 the chain carries N6-(pyridoxal phosphate)lysine. Residue Arg387 participates in L-aspartate binding.

Belongs to the class-I pyridoxal-phosphate-dependent aminotransferase family. In terms of assembly, homodimer. Pyridoxal 5'-phosphate serves as cofactor.

The protein resides in the cytoplasm. It carries out the reaction L-aspartate + 2-oxoglutarate = oxaloacetate + L-glutamate. The catalysed reaction is L-cysteine + 2-oxoglutarate = 2-oxo-3-sulfanylpropanoate + L-glutamate. The enzyme catalyses (2S)-2-aminobutanoate + 2-oxoglutarate = 2-oxobutanoate + L-glutamate. It catalyses the reaction 3-sulfino-L-alanine + 2-oxoglutarate = 3-sulfinopyruvate + L-glutamate. Functionally, biosynthesis of L-glutamate from L-aspartate or L-cysteine. Important regulator of levels of glutamate, the major excitatory neurotransmitter of the vertebrate central nervous system. Acts as a scavenger of glutamate in brain neuroprotection. The aspartate aminotransferase activity is involved in hepatic glucose synthesis during development and in adipocyte glyceroneogenesis. Using L-cysteine as substrate, regulates levels of mercaptopyruvate, an important source of hydrogen sulfide. Mercaptopyruvate is converted into H(2)S via the action of 3-mercaptopyruvate sulfurtransferase (3MST). Hydrogen sulfide is an important synaptic modulator and neuroprotectant in the brain. This Pongo abelii (Sumatran orangutan) protein is Aspartate aminotransferase, cytoplasmic.